Here is a 3198-residue protein sequence, read N- to C-terminus: Helicase domino (3198 aa).

The span at 1 to 12 shows a compositional bias: gly residues; that stretch reads MNEGNSAGGGHE. 3 disordered regions span residues 1-27, 93-112, and 119-148; these read MNEG…RVTP, LPQQ…APAH, and SSTI…AASI. The span at 134–143 shows a compositional bias: basic and acidic residues; the sequence is QRLDDNEDRT. Positions 187-212 form a coiled coil; sequence KKRILQQKLQILRNLKERHLENVSEY. 2 disordered regions span residues 256–350 and 391–474; these read TSAA…SATS and GGTP…TPNS. Polar residues-rich tracts occupy residues 264–281 and 297–329; these read QNQK…SSLV and NISN…TESN. Positions 330–350 are enriched in low complexity; it reads SSTTVPGTATSGAATSTSATS. A compositionally biased stretch (polar residues) spans 391-404; that stretch reads GGTPLLPCNTSAGS. The span at 452–464 shows a compositional bias: low complexity; the sequence is PGTPTSGSLLSPA. Positions 507–579 constitute an HSA domain; the sequence is LPKLQEPSRP…QELQLKRVAS (73 aa). Residues 635–848 are disordered; that stretch reads NKSVADTPSL…DMEEQDEQED (214 aa). A compositionally biased stretch (polar residues) spans 638-650; that stretch reads VADTPSLNSSRLT. The span at 652-664 shows a compositional bias: basic and acidic residues; the sequence is PKRESDDDFRPES. Phosphoserine occurs at positions 656, 664, and 666. Positions 666 to 696 form a coiled coil; that stretch reads SEDDEETIAKAEEDAADVKEEVTALAKESEM. 2 stretches are compositionally biased toward basic and acidic residues: residues 672 to 695 and 711 to 721; these read TIAK…KESE and ENRDKLMKEEQ. Thr-729 is subject to Phosphothreonine. Ser-733, Ser-736, and Ser-744 each carry phosphoserine. The stretch at 741 to 784 forms a coiled coil; sequence KEASDDDENTISKQEEAEQEIDHKKEIDELEADNDLSVEQLLAK. Basic and acidic residues predominate over residues 753–767; the sequence is KQEEAEQEIDHKKEI. Residues 805 to 831 are compositionally biased toward acidic residues; it reads LDSDDDSTAVDSTEESEDAATEDEEDL. Thr-838 is subject to Phosphothreonine. Residues 926-1091 form the Helicase ATP-binding domain; sequence VTMNERKLNG…WSLMHFLMPY (166 aa). 939 to 946 is a binding site for ATP; that stretch reads DEMGLGKT. The interval 1471-1492 is disordered; it reads VQKQSIANGKTEPEEETEAEDP. Positions 1662–1812 constitute a Helicase C-terminal domain; sequence TMDRLLRQLK…DMAIEGGNFT (151 aa). The interval 1828-1856 is disordered; that stretch reads EQSEQDESSQEKSENKDRIVATTTLSDTP. Residues 1836-1846 show a composition bias toward basic and acidic residues; that stretch reads SQEKSENKDRI. A coiled-coil region spans residues 1951–1996; that stretch reads AAWTAEQLRAAEAELEAQKREWEANRLAAMHKEEELLKQETEAEEM. The interval 2061–2100 is disordered; that stretch reads KEHKRSRTDAGYDGSRRPNKMRREDNYVPPRSLFDRPTPQ. Residues 2067 to 2086 show a composition bias toward basic and acidic residues; sequence RTDAGYDGSRRPNKMRREDN. Positions 2136–2205 constitute a Myb-like domain; the sequence is TEPEAMAEWC…QCRWRYETHI (70 aa). The tract at residues 2318 to 2362 is disordered; it reads IREKQRGQQMSQPPVGVGVVQQMQQQSQQQQQPAPPPLPQQQQPQ. Over residues 2325 to 2349 the composition is skewed to low complexity; the sequence is QQMSQPPVGVGVVQQMQQQSQQQQQ.

The protein belongs to the SNF2/RAD54 helicase family. SWR1 subfamily. Component of the Tip60 chromatin-remodeling complex which contains Domino, Tip60, Tra1, Brd8, E(Pc), DMAP1, Pontin, Reptin, Ing3, Act87E, BAP55, Mrg15, MrgBP, Gas41 and YL-1. Isoform B is present at high levels in ovary, in follicle cells, nurse cells and oocyte. Isoform B is also present in germline and somatic stem cells from the germarium. Isoform A is undetectable in adult ovary (at protein level).

It localises to the nucleus. Its function is as follows. Mediates the ATP-dependent exchange of unmodified histone H2AV for its phosphorylated and acetylated form H2AVK5acS138ph, leading to transcriptional regulation of selected genes by chromatin remodeling. Involved in Notch signaling. Represses E2F target genes. Required for somatic stem cell self-renewal but not for germline stem cell self-renewal. Involved in oogenesis. The sequence is that of Helicase domino (dom) from Drosophila melanogaster (Fruit fly).